A 476-amino-acid polypeptide reads, in one-letter code: Cysteine--tRNA ligase (476 aa).

C27 contacts Zn(2+). Residues 29 to 39 carry the 'HIGH' region motif; that stretch reads PTTYNYIHLGN. C207, H232, and E236 together coordinate Zn(2+). The short motif at 264–268 is the 'KMSKS' region element; the sequence is KMSKS. Residue K267 participates in ATP binding.

Belongs to the class-I aminoacyl-tRNA synthetase family. As to quaternary structure, monomer. The cofactor is Zn(2+).

The protein resides in the cytoplasm. The enzyme catalyses tRNA(Cys) + L-cysteine + ATP = L-cysteinyl-tRNA(Cys) + AMP + diphosphate. The sequence is that of Cysteine--tRNA ligase from Moorella thermoacetica (strain ATCC 39073 / JCM 9320).